A 169-amino-acid chain; its full sequence is Ribosome-binding factor A (169 aa).

The tract at residues 124–169 (AGAKHAGDADPYKSDIPEDVEIDEDDFDEEDEDLIDDEELDEDGNK) is disordered. Over residues 128-139 (HAGDADPYKSDI) the composition is skewed to basic and acidic residues. Acidic residues predominate over residues 140–169 (PEDVEIDEDDFDEEDEDLIDDEELDEDGNK).

This sequence belongs to the RbfA family. Monomer. Binds 30S ribosomal subunits, but not 50S ribosomal subunits or 70S ribosomes.

It localises to the cytoplasm. Its function is as follows. One of several proteins that assist in the late maturation steps of the functional core of the 30S ribosomal subunit. Associates with free 30S ribosomal subunits (but not with 30S subunits that are part of 70S ribosomes or polysomes). Required for efficient processing of 16S rRNA. May interact with the 5'-terminal helix region of 16S rRNA. The polypeptide is Ribosome-binding factor A (Arthrobacter sp. (strain FB24)).